The chain runs to 423 residues: Glucuronoxylanase XynC (423 aa).

A signal peptide spans methionine 1–alanine 33. Residue glutamate 172 is the Proton donor of the active site. Glutamate 261 functions as the Nucleophile in the catalytic mechanism.

Belongs to the glycosyl hydrolase 30 family.

It localises to the secreted. The catalysed reaction is Endohydrolysis of (1-&gt;4)-beta-D-xylosyl links in some glucuronoarabinoxylans.. It functions in the pathway glycan degradation; xylan degradation. Catalyzes the depolymerization of methylglucuronoxylan (MeGAXn). It cleaves the beta-1,4-xylosidic bond penultimate to that linking carbon one of the xylose residue substituted with alpha-1,2-linked 4-O-methyl-D-glucuronate (MeGA). This chain is Glucuronoxylanase XynC (xynC), found in Bacillus subtilis.